The following is a 200-amino-acid chain: Recombination protein RecR (200 aa).

The C4-type zinc finger occupies 58–75 (CSNCFCLKISQTSPCNFC). A Toprim domain is found at 82-177 (SSLCIVATPK…KISRLALGMP (96 aa)).

Belongs to the RecR family.

May play a role in DNA repair. It seems to be involved in an RecBC-independent recombinational process of DNA repair. It may act with RecF and RecO. This is Recombination protein RecR from Chlamydia trachomatis serovar L2 (strain ATCC VR-902B / DSM 19102 / 434/Bu).